A 577-amino-acid polypeptide reads, in one-letter code: Cryptochrome DASH, chloroplastic/mitochondrial (577 aa).

A chloroplast and mitochondrion-targeting transit peptide spans 1 to 53; that stretch reads MIKQPFLLTKFTPFSSKSKHTLFTFHCNFSIKMASLTARTTPTVQNVPGLTPE. The Photolyase/cryptochrome alpha/beta domain occupies 78 to 219; it reads GVAIVWFRND…GNDPGSGNTT (142 aa). Residues 550 to 577 are disordered; that stretch reads TKKTGDSKTAFSSRRGRPEDNRRKRHGY.

It belongs to the DNA photolyase class-1 family. FAD serves as cofactor. The cofactor is (6R)-5,10-methylene-5,6,7,8-tetrahydrofolate. Expressed in the endosperm and embryo 96 hours after seed imbibition. In the embryo, detected in the root meristem, the root cap, the shoot apical meristem and the epidermis of cotyledons. In adult plants, detcted in roots, the whole leaf lamina, the stem and in glandular trichomes.

The protein localises to the plastid. Its subcellular location is the chloroplast. It localises to the mitochondrion. In terms of biological role, may have a photoreceptor function and might bind ss- and ds-DNA in a sequence non-specific manner. Lacks photolyase activity. Has a potential role in detecting the dawn and dusk transitions and, consequently, in circadian input pathways. This is Cryptochrome DASH, chloroplastic/mitochondrial from Solanum lycopersicum (Tomato).